A 75-amino-acid polypeptide reads, in one-letter code: uncharacterized protein (75 aa).

This is an uncharacterized protein from Halalkalibacterium halodurans (strain ATCC BAA-125 / DSM 18197 / FERM 7344 / JCM 9153 / C-125) (Bacillus halodurans).